We begin with the raw amino-acid sequence, 143 residues long: Large ribosomal subunit protein bL17 (143 aa).

A compositionally biased stretch (basic and acidic residues) spans 124–133 (GAGDRARLEA). Residues 124 to 143 (GAGDRARLEAEGTDAEAAAA) form a disordered region.

The protein belongs to the bacterial ribosomal protein bL17 family. As to quaternary structure, part of the 50S ribosomal subunit. Contacts protein L32.

In Mesorhizobium japonicum (strain LMG 29417 / CECT 9101 / MAFF 303099) (Mesorhizobium loti (strain MAFF 303099)), this protein is Large ribosomal subunit protein bL17.